Consider the following 1121-residue polypeptide: CRISPR-associated endonuclease Cas9 1 (1121 aa).

Aspartate 9 serves as the catalytic For RuvC-like nuclease domain. The Mg(2+) site is built by aspartate 9, glutamate 509, and glutamate 513. The HNH Cas9-type domain occupies 516–684; sequence EDDEKKAIQK…VRKKFIERNL (169 aa). The Proton acceptor for HNH nuclease domain role is filled by histidine 599. Histidine 738 contributes to the Mg(2+) binding site.

The protein belongs to the CRISPR-associated protein Cas9 family. Subtype II-A subfamily. As to quaternary structure, monomer. Binds crRNA and tracrRNA. The cofactor is Mg(2+).

In terms of biological role, CRISPR (clustered regularly interspaced short palindromic repeat) is an adaptive immune system that provides protection against mobile genetic elements (viruses, transposable elements and conjugative plasmids). CRISPR clusters contain spacers, sequences complementary to antecedent mobile elements, and target invading nucleic acids. CRISPR clusters are transcribed and processed into CRISPR RNA (crRNA). In type II CRISPR systems correct processing of pre-crRNA requires a trans-encoded small RNA (tracrRNA), endogenous ribonuclease 3 (rnc) and this protein. The tracrRNA serves as a guide for ribonuclease 3-aided processing of pre-crRNA. Subsequently Cas9/crRNA/tracrRNA endonucleolytically cleaves linear or circular dsDNA target complementary to the spacer; Cas9 is inactive in the absence of the 2 guide RNAs (gRNA). Cas9 recognizes the protospacer adjacent motif (PAM) in the CRISPR repeat sequences to help distinguish self versus nonself, as targets within the bacterial CRISPR locus do not have PAMs. PAM recognition is also required for catalytic activity. Cuts target DNA when Cas9 and gRNAs are mixed. The chain is CRISPR-associated endonuclease Cas9 1 from Streptococcus thermophilus (strain ATCC BAA-491 / LMD-9).